The sequence spans 174 residues: Cytochrome c-550-like protein (174 aa).

Residues 1 to 37 (MPGQTQGAKRWRVPGRGWRWAGILLLVWLGLASPAAG) form the signal peptide. Residues cysteine 82, cysteine 85, histidine 86, and cysteine 136 each contribute to the heme c site.

This sequence belongs to the cytochrome c family. PsbV subfamily. Heme c serves as cofactor.

Its subcellular location is the cellular thylakoid membrane. Possible low-potential cytochrome c. This Synechococcus sp. (strain JA-3-3Ab) (Cyanobacteria bacterium Yellowstone A-Prime) protein is Cytochrome c-550-like protein (psbV2).